The chain runs to 240 residues: Large ribosomal subunit protein uL1c (240 aa).

Belongs to the universal ribosomal protein uL1 family. In terms of assembly, part of the 50S ribosomal subunit.

The protein localises to the plastid. It localises to the chloroplast. Its function is as follows. Binds directly to 23S rRNA. Might be involved in E site tRNA release (Potential). This is Large ribosomal subunit protein uL1c (rpl1) from Cyanidium caldarium (Red alga).